The following is an 82-amino-acid chain: Conotoxin Gla-TxX (82 aa).

An N-terminal signal peptide occupies residues 1 to 25 (MSGHTSVSFLLLSIVALGMVATVIC). A 4-carboxyglutamate mark is found at E30, E34, E37, E40, and E41. N72 bears the Asparagine amide mark. Residues 77 to 82 (LIHMQK) constitute a propeptide that is removed on maturation.

Post-translationally, contains 4 disulfide bonds. In terms of tissue distribution, expressed by the venom duct.

The protein resides in the secreted. This Conus textile (Cloth-of-gold cone) protein is Conotoxin Gla-TxX.